We begin with the raw amino-acid sequence, 745 residues long: MSDKDRITQLLRELEEAKAREAQERCEKERLQLEHRKTTFLEYLRNCHRHLYNALRLTDTSRSSTGYTKVVGKYYPKRLRPWTNFTNVLHPHYFNLVQQICGQRQLFESASTTKNLGTIISDHLAGNEKAIDRFEVDAVERPVQGILKVLATHEEAGKASICPEFRFSANLRELTQKDDGSSGADDNTSDRSLERRQQAGPNKRPTSKSKYICSNRQPDGVGIRMQPDGGQTQAFIYDYKAAHKVAIEHVRSATAKEHLFHEVVARINDDKLSRDEEVQHREQAEAFIAMALTQVFDYMITYGVSYGYVAAGRCLLLLYVDRDDWQTLYCHPCLPADDVGEPTNDWTDRLSHTAVAQLVSFCLSSFQSEALEGQSLETALSVAKATLKTWSESYADVAYLGLEPAELSSAPSSQNTDISEYTSKAKPTGRKVTLRSCKPAAVLPQGNEHDEHDEEDHSEPGASRLAKRERGPSSGGKDDGRSMVDPQPTRQYCTQACLLGLKRGKDLDENCPNVSLHRFDGSSRHPVNAHSFTDMVEQQLLLSPYKGCRMVDFWGKRGAMGWLFKLELLPYGYTFVGKGTVEDRLNRLEHEGRVYARLDHLQGDVVPVHLGLVRLDRGYILPGLEFAVYMMLMSWAGQTPSANMDDAETLKSESLTAIWSEGVDHGDNNRANYLWNAERCRIMIIDFDRAHLFPPLKARAVSRLSKPKRKRETLNSYLTEITGREARHVFKQMDRSPMATPSHGG.

A coiled-coil region spans residues lysine 4–glutamate 34. Disordered regions lie at residues glutamate 173–glycine 222 and leucine 407–glutamine 487. The span at threonine 188–glutamine 197 shows a compositional bias: basic and acidic residues. Polar residues-rich tracts occupy residues lysine 208–glutamine 217 and serine 409–threonine 422. A required for antidote activity region spans residues serine 214–tryptophan 325. Residues alanine 466–serine 482 are compositionally biased toward basic and acidic residues. The required for poison activity stretch occupies residues glutamine 491 to glycine 745.

The protein resides in the cytoplasm. Its subcellular location is the nucleus. In terms of biological role, promotes unequal transmission of alleles from the parental zygote to progeny spores by acting as poison/antidote system, leading to poisoning of progeny that do not inherit the allele. May possess DNA nuclease activity that leads to spore killing, and a kinase activity that confers resistance to the nuclease activity. The protein is Meiotic driver SPOK3 of Podospora anserina (Pleurage anserina).